We begin with the raw amino-acid sequence, 383 residues long: MKSKTYETHFPPLSAEQLAENRKKKVICGMSGGVDSSVSAFILQQQGYQVEGLFMKNWEEDDDTDYCTAAADLADAQAVCDKLGIKLHKINFAAEYWDNVFEHFLQEYKAGRTPNPDILCNKEIKFKAFLDYAAEDLGADYIATGHYVRRGEKDGQCQLLRGLDNNKDQSYFLYTLSKDQVAQSLFPVGEIEKPIVRAIAEDLGLATAKKKDSTGICFIGERKFKDFLARYLPAQPGEIRTVEGKVVGRHDGLMYHTLGQRKGLGIGGVKGMGEDPFYVVEKDLVNNVLVVAQGHDNSALLSSGLIASQLHWVDRQPIRQPVRCTVKTRYRQEDIPCEIQPINDETIRVVFDEPQIAVTPGQSAVFYQGEICLGGGVIETQIK.

Residues 29–36 (GMSGGVDS) and M55 contribute to the ATP site. The tract at residues 115 to 117 (NPD) is interaction with target base in tRNA. Residue C120 is the Nucleophile of the active site. Residues C120 and C217 are joined by a disulfide bond. G145 contacts ATP. Residues 167-169 (KDQ) are interaction with tRNA. The active-site Cysteine persulfide intermediate is the C217. Positions 329 to 330 (RY) are interaction with tRNA.

Belongs to the MnmA/TRMU family.

It is found in the cytoplasm. The enzyme catalyses S-sulfanyl-L-cysteinyl-[protein] + uridine(34) in tRNA + AH2 + ATP = 2-thiouridine(34) in tRNA + L-cysteinyl-[protein] + A + AMP + diphosphate + H(+). Functionally, catalyzes the 2-thiolation of uridine at the wobble position (U34) of tRNA, leading to the formation of s(2)U34. This is tRNA-specific 2-thiouridylase MnmA from Pasteurella multocida (strain Pm70).